The following is a 314-amino-acid chain: Transcription factor TCP20 (314 aa).

Disordered stretches follow at residues 1 to 91 and 295 to 314; these read MDPK…RGRR and NHEEHQQESGEKDDSQGSGR. 2 stretches are compositionally biased toward basic and acidic residues: residues 38–49 and 77–89; these read DENRKPTTEIKD and SNKDRHTKVEGRG. Residues 78 to 132 form the TCP domain; the sequence is NKDRHTKVEGRGRRIRMPALCAARIFQLTRELGHKSDGETIQWLLQQAEPSIIAA.

As to quaternary structure, interacts with PURA1. Interacts with SPL.

The protein resides in the nucleus. In terms of biological role, transcription factor that binds to the site II motif (3'-TGGGCC/T-5') in the promoter of PCNA-2 and to 3'-GCCCG/A-5' elements in the promoters of cyclin CYCB1-1 and ribosomal protein genes. The protein is Transcription factor TCP20 (TCP20) of Arabidopsis thaliana (Mouse-ear cress).